Reading from the N-terminus, the 334-residue chain is Flotillin-like protein FloA (334 aa).

Residues 3–23 (LYLIFLIVVGVVGLVLVGLFL) traverse the membrane as a helical segment.

Belongs to the flotillin-like FloA family. In terms of assembly, homooligomerizes.

The protein resides in the cell membrane. It localises to the membrane raft. Found in functional membrane microdomains (FMM) that may be equivalent to eukaryotic membrane rafts. FMMs are highly dynamic and increase in number as cells age. Flotillins are thought to be important factors in membrane fluidity. This Opitutus terrae (strain DSM 11246 / JCM 15787 / PB90-1) protein is Flotillin-like protein FloA.